The chain runs to 506 residues: Maturase K (506 aa).

It belongs to the intron maturase 2 family. MatK subfamily.

The protein resides in the plastid. It is found in the chloroplast. Functionally, usually encoded in the trnK tRNA gene intron. Probably assists in splicing its own and other chloroplast group II introns. This Arctostaphylos uva-ursi (Bearberry) protein is Maturase K.